The following is a 370-amino-acid chain: Chaperone protein DnaJ (370 aa).

The J domain maps to aspartate 6–glycine 70. The CR-type zinc-finger motif lies at glycine 128–threonine 208. 8 residues coordinate Zn(2+): cysteine 141, cysteine 144, cysteine 158, cysteine 161, cysteine 182, cysteine 185, cysteine 196, and cysteine 199. CXXCXGXG motif repeat units lie at residues cysteine 141–glycine 148, cysteine 158–glycine 165, cysteine 182–glycine 189, and cysteine 196–glycine 203.

This sequence belongs to the DnaJ family. In terms of assembly, homodimer. Requires Zn(2+) as cofactor.

It localises to the cytoplasm. Participates actively in the response to hyperosmotic and heat shock by preventing the aggregation of stress-denatured proteins and by disaggregating proteins, also in an autonomous, DnaK-independent fashion. Unfolded proteins bind initially to DnaJ; upon interaction with the DnaJ-bound protein, DnaK hydrolyzes its bound ATP, resulting in the formation of a stable complex. GrpE releases ADP from DnaK; ATP binding to DnaK triggers the release of the substrate protein, thus completing the reaction cycle. Several rounds of ATP-dependent interactions between DnaJ, DnaK and GrpE are required for fully efficient folding. Also involved, together with DnaK and GrpE, in the DNA replication of plasmids through activation of initiation proteins. This Roseiflexus castenholzii (strain DSM 13941 / HLO8) protein is Chaperone protein DnaJ.